The following is a 723-amino-acid chain: Malate synthase G (723 aa).

Acetyl-CoA contacts are provided by residues Val-118, 125-126, Ser-274, and Arg-311; that span reads RY. The Proton acceptor role is filled by Arg-338. Glyoxylate is bound by residues Arg-338, Glu-427, and 452-455; that span reads GFLD. Positions 427 and 455 each coordinate Mg(2+). Pro-536 is an acetyl-CoA binding site. Cys-617 is modified (cysteine sulfenic acid (-SOH)). Asp-631 acts as the Proton donor in catalysis. Cys-688 is subject to Cysteine sulfenic acid (-SOH).

It belongs to the malate synthase family. GlcB subfamily. Monomer. Mg(2+) serves as cofactor.

Its subcellular location is the cytoplasm. The catalysed reaction is glyoxylate + acetyl-CoA + H2O = (S)-malate + CoA + H(+). The protein operates within carbohydrate metabolism; glyoxylate cycle; (S)-malate from isocitrate: step 2/2. Its function is as follows. Involved in the glycolate utilization. Catalyzes the condensation and subsequent hydrolysis of acetyl-coenzyme A (acetyl-CoA) and glyoxylate to form malate and CoA. In Escherichia coli O6:H1 (strain CFT073 / ATCC 700928 / UPEC), this protein is Malate synthase G.